A 398-amino-acid chain; its full sequence is Alpha-2,8-sialyltransferase 8F (398 aa).

Residues 1 to 3 (MRP) lie on the Cytoplasmic side of the membrane. Residues 4-24 (GGALLALLASLLLLLLLRLLW) traverse the membrane as a helical; Signal-anchor for type II membrane protein segment. Topologically, residues 25 to 398 (CPADAPGRAR…KLQFSKCEVA (374 aa)) are lumenal. N-linked (GlcNAc...) asparagine glycosylation is found at Asn-66, Asn-93, Asn-151, and Asn-196. Intrachain disulfides connect Cys-186–Cys-335 and Cys-200–Cys-395. Residues Asn-214, 236-238 (NPS), and 322-324 (STG) contribute to the substrate site. His-370 functions as the Proton donor/acceptor in the catalytic mechanism.

Belongs to the glycosyltransferase 29 family.

The protein resides in the golgi apparatus membrane. It carries out the reaction a ganglioside GM3 + CMP-N-acetyl-beta-neuraminate = a ganglioside GD3 + CMP + H(+). The enzyme catalyses a ganglioside GM3 (d18:1(4E)) + CMP-N-acetyl-beta-neuraminate = a ganglioside GD3 (d18:1(4E)) + CMP + H(+). It catalyses the reaction a ganglioside GD1a (d18:1(4E)) + CMP-N-acetyl-beta-neuraminate = a ganglioside GT1a (d18:1(4E)) + CMP + H(+). The catalysed reaction is a ganglioside GD1a + CMP-N-acetyl-beta-neuraminate = a ganglioside GT1a + CMP + H(+). It carries out the reaction a ganglioside GM1b (d18:1(4E)) + CMP-N-acetyl-beta-neuraminate = a ganglioside GD1c (d18:1(4E)) + CMP + H(+). The enzyme catalyses a ganglioside GM1b + CMP-N-acetyl-beta-neuraminate = a ganglioside GD1c + CMP + H(+). It catalyses the reaction a ganglioside GM4 (d18:1(4E)) + CMP-N-acetyl-beta-neuraminate = an N-acetyl-alpha-neuraminosyl-(2-&gt;8)-N-acetyl-alpha-neuraminosyl-(2-&gt;3)-beta-D-galactosyl-(1&lt;-&gt;1')-N-acylsphing-4-enine + CMP + H(+). The catalysed reaction is N-acetyl-alpha-neuraminosyl-(2-&gt;3)-beta-D-galactosyl-(1&lt;-&gt;1')-ceramide + CMP-N-acetyl-beta-neuraminate = N-acetyl-alpha-neuraminosyl-(2-&gt;8)-N-acetyl-alpha-neuraminosyl-(2-&gt;3)-beta-D-galactosyl-(1&lt;-&gt;1')-ceramide + CMP + H(+). It carries out the reaction a ganglioside GT1b (d18:1(4E)) + CMP-N-acetyl-beta-neuraminate = a ganglioside GQ1b (d18:1(4E)) + CMP + H(+). The enzyme catalyses a ganglioside GT1b + CMP-N-acetyl-beta-neuraminate = a ganglioside GQ1b + CMP + H(+). It functions in the pathway protein modification; protein glycosylation. Its function is as follows. Alpha-2,8-sialyltransferase that prefers O-glycans to N-glycans or glycolipids as acceptor substrates. The minimal acceptor substrate is the NeuAc-alpha-2,3(6)-Gal sequence at the non-reducing end of their carbohydrate groups. The sequence is that of Alpha-2,8-sialyltransferase 8F from Homo sapiens (Human).